A 484-amino-acid polypeptide reads, in one-letter code: Cobyric acid synthase (484 aa).

The GATase cobBQ-type domain maps to 251 to 438; the sequence is ALKIAVPVLP…LHGLFCSDAY (188 aa). Cys-333 acts as the Nucleophile in catalysis. The active site involves His-430.

The protein belongs to the CobB/CobQ family. CobQ subfamily.

The protein operates within cofactor biosynthesis; adenosylcobalamin biosynthesis. Functionally, catalyzes amidations at positions B, D, E, and G on adenosylcobyrinic A,C-diamide. NH(2) groups are provided by glutamine, and one molecule of ATP is hydrogenolyzed for each amidation. In Rhizobium rhizogenes (strain K84 / ATCC BAA-868) (Agrobacterium radiobacter), this protein is Cobyric acid synthase.